Reading from the N-terminus, the 405-residue chain is Indoleamine 2,3-dioxygenase acdA (405 aa).

His-312 lines the heme pocket.

The protein belongs to the indoleamine 2,3-dioxygenase family. Heme serves as cofactor.

The catalysed reaction is L-tryptophan + O2 = N-formyl-L-kynurenine. It functions in the pathway secondary metabolite biosynthesis. Its function is as follows. Indoleamine 2,3-dioxygenase; part of the gene cluster that mediates the biosynthesis of aspcandine, a pyrrolobenzazepine alkaloid. Initially, the indoleamine 2,3-dioxygenase acdA accepts L-tryptophan and performs the oxidative opening of the indole ring to yield N'-formyl-L-kynurenine, which undergoes the spontaneous deformylation reaction to provide L-kynurenine. The kynurenine 3-monooxygenase acdD then hydroxylates L-kynurenine to afford 3-hydroxy-L-kynurenine. 3-hydroxy-L-kynurenine is activated by the A domain of the NRPS-PKS acdB and subsequently loaded onto the enzyme. The KS domain conducts the decarboxylative condensation of the 3-hydroxy-L-kynurenyl and malonyl moieties, and subsequent nucleophilic attacks by the two amino groups would occur nonenzymatically at two distinct positions, achieving the chain release and the construction of the tricyclic system. Finally, a dehydration reaction completes the biosynthesis to yield aspcandine. The chain is Indoleamine 2,3-dioxygenase acdA from Aspergillus candidus.